A 113-amino-acid polypeptide reads, in one-letter code: Virion membrane protein A21 homolog (113 aa).

A helical; Signal-anchor for type III membrane protein transmembrane segment spans residues 1–23 (MFVLFLIVCYFILIFNIIVPKIA). Residues 24 to 113 (DKLRLEHEAF…CERAYTELFL (90 aa)) lie on the Virion surface side of the membrane.

Belongs to the chordopoxvirinae A21 family. As to quaternary structure, envelope protein part of a stable entry-fusion complex (EFC) which is at least composed of proteins A16, A21, A28, G3, G9, H2, J5, and L5. Formation of the viral membrane is necessary for the assembly of the complex. In terms of processing, contains two intramolecular disulfide bonds. They are created by the viral disulfide bond formation pathway, a poxvirus-specific pathway that operates on the cytoplasmic side of the MV membranes.

It is found in the virion membrane. Envelope protein part of the entry-fusion complex responsible for the virus membrane fusion with host cell membrane during virus entry. This chain is Virion membrane protein A21 homolog, found in Vertebrata (FPV).